Here is a 273-residue protein sequence, read N- to C-terminus: Ribosomal RNA small subunit methyltransferase A (273 aa).

S-adenosyl-L-methionine-binding residues include N18, L20, G45, E66, D91, and N113.

It belongs to the class I-like SAM-binding methyltransferase superfamily. rRNA adenine N(6)-methyltransferase family. RsmA subfamily.

The protein localises to the cytoplasm. It carries out the reaction adenosine(1518)/adenosine(1519) in 16S rRNA + 4 S-adenosyl-L-methionine = N(6)-dimethyladenosine(1518)/N(6)-dimethyladenosine(1519) in 16S rRNA + 4 S-adenosyl-L-homocysteine + 4 H(+). Its function is as follows. Specifically dimethylates two adjacent adenosines (A1518 and A1519) in the loop of a conserved hairpin near the 3'-end of 16S rRNA in the 30S particle. May play a critical role in biogenesis of 30S subunits. The sequence is that of Ribosomal RNA small subunit methyltransferase A from Salmonella choleraesuis (strain SC-B67).